The primary structure comprises 61 residues: U-stichotoxin-Hcr1b (61 aa).

The first 19 residues, 1–19, serve as a signal peptide directing secretion; the sequence is PILIFAFVMFAVMVNAKPS. Residues 20–31 constitute a propeptide that is removed on maturation; the sequence is IDDAEMKREPKP. 2 disulfides stabilise this stretch: cysteine 38–cysteine 49 and cysteine 41–cysteine 56.

This sequence belongs to the Hau1a/HC18/HC19 family.

It localises to the secreted. Its subcellular location is the nematocyst. Its function is as follows. Toxin that is lethal to crab. Does not produce the typical symptoms associated with sodium channel toxins in crabs, suggesting that it likely does not act on sodium channels. In Radianthus crispa (Leathery sea anemone), this protein is U-stichotoxin-Hcr1b.